Reading from the N-terminus, the 363-residue chain is MNAAEWVAELKRKSQIESFKEQKGLVYDDHIEKVLYSGSVNGTLLVIEGNSCSGKTELLYHLASNVLLRSSQELVLIVSSEWDWSIKRLTFILHERLISSRGVSQTCKCNCAVKLENESTVHLQNAAREDGTDEDINSNSVNDVSLSSGETMLQFPEHEEQHECNREMEQLYESASSTVYPCSFWEDAERKIDAQCAILWPMEFSGVVESIPQSTKDLLRIWKEAKIQMHEDFRCNKTEFNEACFDASSSRLGCILMDGLSTFYWQLRLERGYTQVYADLQNRLCTSSKLFGCPVVCTNWLLNNKQHLPIQCKRFRSERRANARFYLENCVSKLGETFYLSVKGVQTKTEMASPYSQQEMEKV.

It belongs to the RecA family. RAD51 subfamily. Interacts with rdl1 and sws1.

It is found in the cytoplasm. The protein resides in the nucleus. Functionally, required for normal levels of meiotic recombination. Acts in the recombinational pathway of double-strand break (DSB) repair together with rhp51, rhp55 and rad22. Required for the full extent of DNA recombination and cell survival under condition of a replication fork collapse. In Schizosaccharomyces pombe (strain 972 / ATCC 24843) (Fission yeast), this protein is DNA repair protein rlp1.